A 77-amino-acid polypeptide reads, in one-letter code: DNA-directed RNA polymerase subunit epsilon (77 aa).

The protein belongs to the RNA polymerase subunit epsilon family. RNAP is composed of a core of 2 alpha, a beta and a beta' subunit. The core is associated with a delta subunit, and at least one of epsilon or omega. When a sigma factor is associated with the core the holoenzyme is formed, which can initiate transcription.

It carries out the reaction RNA(n) + a ribonucleoside 5'-triphosphate = RNA(n+1) + diphosphate. In terms of biological role, a non-essential component of RNA polymerase (RNAP). This Lactobacillus delbrueckii subsp. bulgaricus (strain ATCC 11842 / DSM 20081 / BCRC 10696 / JCM 1002 / NBRC 13953 / NCIMB 11778 / NCTC 12712 / WDCM 00102 / Lb 14) protein is DNA-directed RNA polymerase subunit epsilon.